The primary structure comprises 495 residues: ATP synthase subunit beta, chloroplastic (495 aa).

172-179 (GGAGVGKT) lines the ATP pocket.

This sequence belongs to the ATPase alpha/beta chains family. As to quaternary structure, F-type ATPases have 2 components, CF(1) - the catalytic core - and CF(0) - the membrane proton channel. CF(1) has five subunits: alpha(3), beta(3), gamma(1), delta(1), epsilon(1). CF(0) has four main subunits: a(1), b(1), b'(1) and c(9-12).

The protein localises to the plastid. Its subcellular location is the chloroplast thylakoid membrane. It carries out the reaction ATP + H2O + 4 H(+)(in) = ADP + phosphate + 5 H(+)(out). Its function is as follows. Produces ATP from ADP in the presence of a proton gradient across the membrane. The catalytic sites are hosted primarily by the beta subunits. The chain is ATP synthase subunit beta, chloroplastic from Bowiea volubilis (Climbing onion).